Here is a 93-residue protein sequence, read N- to C-terminus: DNA-binding protein HB1 (93 aa).

This sequence belongs to the bacterial histone-like protein family. Homodimer.

Its function is as follows. Histone-like DNA-binding protein which is capable of wrapping DNA to stabilize it, and thus to prevent its denaturation under extreme environmental conditions. This chain is DNA-binding protein HB1 (hup), found in Bifidobacterium longum (strain NCC 2705).